The sequence spans 520 residues: GMP synthase [glutamine-hydrolyzing] (520 aa).

The 194-residue stretch at 9–202 (KILILDFGSQ…VRKICGCSGQ (194 aa)) folds into the Glutamine amidotransferase type-1 domain. Catalysis depends on Cys-86, which acts as the Nucleophile. Residues His-176 and Glu-178 contribute to the active site. The 193-residue stretch at 203–395 (WTPGHIIDDA…LGLPHQMVWR (193 aa)) folds into the GMPS ATP-PPase domain. 230–236 (SGGVDSS) serves as a coordination point for ATP.

Homodimer.

It catalyses the reaction XMP + L-glutamine + ATP + H2O = GMP + L-glutamate + AMP + diphosphate + 2 H(+). It participates in purine metabolism; GMP biosynthesis; GMP from XMP (L-Gln route): step 1/1. Its function is as follows. Catalyzes the synthesis of GMP from XMP. In Geobacter metallireducens (strain ATCC 53774 / DSM 7210 / GS-15), this protein is GMP synthase [glutamine-hydrolyzing].